We begin with the raw amino-acid sequence, 404 residues long: Cysteine desulfurase IscS (404 aa).

Residues 75-76, asparagine 155, glutamine 183, and 203-205 contribute to the pyridoxal 5'-phosphate site; these read AT and SAH. The residue at position 206 (lysine 206) is an N6-(pyridoxal phosphate)lysine. Residue threonine 243 coordinates pyridoxal 5'-phosphate. The active-site Cysteine persulfide intermediate is cysteine 328. Cysteine 328 contributes to the [2Fe-2S] cluster binding site.

The protein belongs to the class-V pyridoxal-phosphate-dependent aminotransferase family. NifS/IscS subfamily. As to quaternary structure, homodimer. Forms a heterotetramer with IscU, interacts with other sulfur acceptors. The cofactor is pyridoxal 5'-phosphate.

It localises to the cytoplasm. It catalyses the reaction (sulfur carrier)-H + L-cysteine = (sulfur carrier)-SH + L-alanine. Its pathway is cofactor biosynthesis; iron-sulfur cluster biosynthesis. In terms of biological role, master enzyme that delivers sulfur to a number of partners involved in Fe-S cluster assembly, tRNA modification or cofactor biosynthesis. Catalyzes the removal of elemental sulfur atoms from cysteine to produce alanine. Functions as a sulfur delivery protein for Fe-S cluster synthesis onto IscU, an Fe-S scaffold assembly protein, as well as other S acceptor proteins. The polypeptide is Cysteine desulfurase IscS (Neisseria meningitidis serogroup A / serotype 4A (strain DSM 15465 / Z2491)).